The following is an 85-amino-acid chain: V-type proton ATPase subunit f (85 aa).

2 helical membrane passes run 13-33 (CTGL…LFSI) and 56-76 (CLGA…QVIV).

V-ATPase is a heteromultimeric enzyme composed of a peripheral catalytic V1 complex (components A to H) attached to an integral membrane V0 proton pore complex (components: a, c, c', c'', d, e, f and VOA1).

The protein localises to the endoplasmic reticulum membrane. Accessory component of the V0 complex of vacuolar(H+)-ATPase (V-ATPase), a multisubunit enzyme composed of a peripheral complex (V1) that hydrolyzes ATP and a membrane integral complex (V0) that translocates protons. V-ATPase is responsible for acidifying and maintaining the pH of intracellular compartments. This is V-type proton ATPase subunit f from Schizosaccharomyces pombe (strain 972 / ATCC 24843) (Fission yeast).